We begin with the raw amino-acid sequence, 407 residues long: Peptidase T (407 aa).

Position 81 (His81) interacts with Zn(2+). The active site involves Asp83. Asp142 serves as a coordination point for Zn(2+). Glu176 (proton acceptor) is an active-site residue. Zn(2+)-binding residues include Glu177, Asp199, and His381.

This sequence belongs to the peptidase M20B family. The cofactor is Zn(2+).

The protein resides in the cytoplasm. It catalyses the reaction Release of the N-terminal residue from a tripeptide.. In terms of biological role, cleaves the N-terminal amino acid of tripeptides. The chain is Peptidase T from Streptococcus pneumoniae (strain P1031).